The primary structure comprises 156 residues: MRNVDKQDNLVRAFKALLKEERFGSQGDIVEALKNEGFDNINQSKVSRMLTKFGAVRTRNAKMEMVYCLPAELGVPTASSSLRELVLDVDYNNALVVIRTGPGAAQLIARLLDSLGKSEGILGVVAGDDTIFITPTLDVPVKELFHSVCELFEYAG.

Belongs to the ArgR family.

It is found in the cytoplasm. It participates in amino-acid biosynthesis; L-arginine biosynthesis [regulation]. Regulates arginine biosynthesis genes. The chain is Arginine repressor from Vibrio cholerae serotype O1 (strain ATCC 39315 / El Tor Inaba N16961).